We begin with the raw amino-acid sequence, 207 residues long: 2,3-bisphosphoglycerate-dependent phosphoglycerate mutase (207 aa).

Substrate is bound by residues 10–17 (RHGQSEWN), 23–24 (TG), R62, 89–92 (ERDY), K100, 116–117 (RR), and 160–161 (GN). H11 functions as the Tele-phosphohistidine intermediate in the catalytic mechanism. The active-site Proton donor/acceptor is E89.

The protein belongs to the phosphoglycerate mutase family. BPG-dependent PGAM subfamily. In terms of assembly, homodimer.

The catalysed reaction is (2R)-2-phosphoglycerate = (2R)-3-phosphoglycerate. Its pathway is carbohydrate degradation; glycolysis; pyruvate from D-glyceraldehyde 3-phosphate: step 3/5. Functionally, catalyzes the interconversion of 2-phosphoglycerate and 3-phosphoglycerate. The protein is 2,3-bisphosphoglycerate-dependent phosphoglycerate mutase of Afipia carboxidovorans (strain ATCC 49405 / DSM 1227 / KCTC 32145 / OM5) (Oligotropha carboxidovorans).